A 430-amino-acid chain; its full sequence is Putrescine 2-hydroxylase (430 aa).

The Rieske domain maps to 88–203 (LYVGHQKLVP…LRDCHGLLFE (116 aa)). C128, H130, C162, and H165 together coordinate [2Fe-2S] cluster.

Belongs to the bacterial ring-hydroxylating dioxygenase alpha subunit family. It depends on [2Fe-2S] cluster as a cofactor.

In terms of biological role, rieske-type iron sulfur protein that can catalyze in vitro the 2-hydroxylation of putrescine, forming 2-hydroxyputrescine. May be involved in the biosynthesis of the cyclic hydroxamate siderophore alcaligin. The polypeptide is Putrescine 2-hydroxylase (Bordetella bronchiseptica (strain ATCC BAA-588 / NCTC 13252 / RB50) (Alcaligenes bronchisepticus)).